The chain runs to 195 residues: Imidazoleglycerol-phosphate dehydratase (195 aa).

The protein belongs to the imidazoleglycerol-phosphate dehydratase family.

It is found in the cytoplasm. It catalyses the reaction D-erythro-1-(imidazol-4-yl)glycerol 3-phosphate = 3-(imidazol-4-yl)-2-oxopropyl phosphate + H2O. The protein operates within amino-acid biosynthesis; L-histidine biosynthesis; L-histidine from 5-phospho-alpha-D-ribose 1-diphosphate: step 6/9. The protein is Imidazoleglycerol-phosphate dehydratase of Cereibacter sphaeroides (strain ATCC 17025 / ATH 2.4.3) (Rhodobacter sphaeroides).